We begin with the raw amino-acid sequence, 98 residues long: MSEAQTAVAAAAPAVKNTRTLVGKVVSDKRAKTVTVLVERRAKHELYGKIVARSRKYHAHDENGDYKMGDVVEISESRPLSKTKNWVVTRLVEKARAV.

It belongs to the universal ribosomal protein uS17 family. In terms of assembly, part of the 30S ribosomal subunit.

One of the primary rRNA binding proteins, it binds specifically to the 5'-end of 16S ribosomal RNA. This chain is Small ribosomal subunit protein uS17, found in Leptothrix cholodnii (strain ATCC 51168 / LMG 8142 / SP-6) (Leptothrix discophora (strain SP-6)).